We begin with the raw amino-acid sequence, 512 residues long: SNF1-related protein kinase catalytic subunit alpha KIN10 (512 aa).

In terms of domain architecture, Protein kinase spans 19 to 271 (YKLGRTLGIG…IPEIRQHPWF (253 aa)). K20 is covalently cross-linked (Glycyl lysine isopeptide (Lys-Gly) (interchain with G-Cter in ubiquitin)). Residue 25–33 (LGIGSFGRV) coordinates ATP. A Glycyl lysine isopeptide (Lys-Gly) (interchain with G-Cter in SUMO) cross-link involves residue K34. Residue K48 coordinates ATP. A Glycyl lysine isopeptide (Lys-Gly) (interchain with G-Cter in SUMO) cross-link involves residue K63. The active-site Proton acceptor is the D142. Phosphoserine is present on S164. T175 carries the post-translational modification Phosphothreonine; by GRIK1 or GRIK2. Residues 290 to 389 (AKKIDEEILQ…GLRSQYPVER (100 aa)) are auto-inhibitory domain (AID). Residues 292–332 (KIDEEILQEVINMGFDRNHLIESLRNRTQNDGTVTYYLILD) enclose the UBA domain. Residues 294–512 (DEEILQEVIN…AAFLAQLRVL (219 aa)) form a regulatory domain (RD) region. S364 bears the Phosphoserine mark. K390 participates in a covalent cross-link: Glycyl lysine isopeptide (Lys-Gly) (interchain with G-Cter in SUMO). Residues 390–512 (KWALGLQSRA…AAFLAQLRVL (123 aa)) form a PPI region. The region spanning 463-511 (AVKSPNVVKFEIQLYKTRDDKYLLDLQRVQGPQFLFLDLCAAFLAQLRV) is the KA1 domain.

The protein belongs to the protein kinase superfamily. CAMK Ser/Thr protein kinase family. SNF1 subfamily. As to quaternary structure, subunit of a probable heterotrimeric complex consisting of an alpha catalytic (KIN10 or KIN11) subunit, and a beta (KINB) and a gamma (KING or SNF4) non-catalytic regulatory subunits. Interacts with KINB2, KINB3, SNF4 and probably with KINB1 and KING1. Interacts with SKP1/ASK1, PAD1, the N-terminus of PRL1 and the WD40 domain of 5PTase13. Potential subunit of a SCF ubiquitin ligase complex consisting of a SNF1-related protein kinase, SKP1 and CUL1. The association of the SCF complex with the proteasome may be mediated by PAD1 and seems to be inhibited by the interaction with PRL1. Interacts with ATAF1. Interacts with ESD4. Interacts with SCE1. Interacts with FUS3. Interacts with PP2C74. Interacts with CDKE1. Interacts with ABI1 and PP2CA. Interacts with KRP6. Interacts with CIPK14. Interacts with FLZ proteins through their FLZ-type zinc finger domains. Interacts with GEBP/STKR1. Interacts with MYC2. Interacts with IDD8. Interacts with BZIP63. Interacts with PTL. Interacts with FLZ3, FLZ9, TCP3, TCP13, HB21/ZHD3 and HB23/ZHD10. Interacts with PTP1. Interacts with RAPTOR1B. Forms oligomers in vitro under strongly reducing conditions. Interacts with WRI1. Interacts with EIN3. Component of a ternary complex composed of BZIP2-BZIP63 heterodimer and KIN10. Interacts with IPK2b. Interacts with FLZ6 and FLZ10. Phosphorylated at Thr-175 in response to glucose. Phosphorylated at Thr-175 under submergence. Autophosphorylated. Dephosphorylated at Thr-175 by ABI1 and PP2CA. In terms of processing, ubiquitinated. Degradation is mediated by a CUL4-based E3 ligase that uses PRL1 as a substrate receptor. Post-translationally, sumoylated by SIZ1. Sumoylated SnRK1 is ubiquitinated and degraded by the proteasome. In terms of tissue distribution, isoform 2 is widely expressed, especially in newly developing tissues. Isoform 2 is expressed throughout the seedling, with highest expression in leaf primordia and vascular tissue, and the seedling root tip. Isoform 2 is later expressed in developing lateral root primordia and developing embryos within siliques. Isoform 1 is widely expressed but at very low levels.

Its subcellular location is the plastid. The protein resides in the chloroplast. It localises to the cytoplasm. It is found in the nucleus. The protein localises to the golgi apparatus. Its subcellular location is the endoplasmic reticulum. It carries out the reaction L-seryl-[protein] + ATP = O-phospho-L-seryl-[protein] + ADP + H(+). The catalysed reaction is L-threonyl-[protein] + ATP = O-phospho-L-threonyl-[protein] + ADP + H(+). Its activity is regulated as follows. Activated by phosphorylation at Thr-175 by GRIK1/SNAK2 and GRIK2/SNAK1. Inactivated by dephosphorylation at Thr-175. Inhibited by trehalose-6-phosphate. Down-regulated by SR45 by affecting its stability. Reduced kinase activity in response to H(2)O(2) treatment. The redox-state of Cys-177 seems to directly influence its kinase activity. Down-regulated by FLZ6 and FLZ10. Catalytic subunit of the probable trimeric SNF1-related protein kinase (SnRK) complex, a central regulator of cellular energy homeostasis, which, in response to seemingly unrelated darkness, sugar and stress conditions, activates energy-producing pathways and inhibits energy-consuming processes. May play a role in a signal transduction cascade regulating gene expression and carbohydrate metabolism in higher plants. The SnRK complex may also be involved in the regulation of fatty acid synthesis by phosphorylation of acetyl-CoA carboxylase and in assimilation of nitrogen by phosphorylating nitrate reductase. In vitro, KIN10 exhibits kinase activity on sucrose phosphate synthase and the kinase activity is inhibited by PRL1. May be a subunit of a SCF ubiquitin ligase complex and thus be involved in proteasomal ubiquitination. Phosphorylates GRIK1/SNAK2 and GRIK2/SNAK1 in vitro. Cooperates with FUS3 to regulate developmental phase transitions and lateral organ development and act both as positive regulators of abscisic acid (ABA) signaling during germination. Phosphorylates FUS3 in embryo. Negatively modulates MYC2 accumulation through its protein phosphorylation. Phosphorylates geminivirus (CaLCuV, TGMV, ToMoV) AL2 protein resulting in a delay in the viral DNA accumulation and symptom appearance during infection. Regulates bZIP63 activity to alter metabolism in response to starvation through its protein phosphorylation. Under sugar deprivation conditions, antagonizes the IDD8 function in flowering time control by its protein phosphorylation. Plays a cardinal role in the control of cell proliferation through inhibition of KRP6 activity by its protein phosphorylation. Under submergence, phosphorylates PTP1, leading to the release of the MPK6 signaling pathway inhibition. Triggers its own SUMO-mediated proteasomal degradation, establishing a negative feedback loop that attenuates SnRK1 signaling and prevents detrimental hyperactivation of stress responses. Phosphorylates RAPTOR1B in vitro. Phosphorylates and down-regulates HMGR1S in vitro. Kinase activity is redox-sensitive. Acts upstream of TOR in the regulation of autophagy. Required for the activation of autophagy by many abiotic stresses. Involved in positive regulation of autophagy, possibly by affecting the phosphorylation of ATG1 proteins. Negatively modulates WRI1 accumulation through its protein phosphorylation. Modulates leaf senescence progression by the negative regulation of EIN3 accumulation through its protein phosphorylation. Under extended darkness, C/S1-bZIP-SnRK1 complex interacts with the histone acetylation machinery to remodel chromatin and facilitate transcription. BZIP2-BZIP63-KIN10 complex binds to the ETFQO promoter to up-regulate its transcription. Phosphorylates and down-regulates IPK2b in vitro. Involved in the regulation of sucrose-induced hypocotyl elongation under light/dark cycles. The protein is SNF1-related protein kinase catalytic subunit alpha KIN10 of Arabidopsis thaliana (Mouse-ear cress).